We begin with the raw amino-acid sequence, 348 residues long: S-adenosylmethionine:tRNA ribosyltransferase-isomerase (348 aa).

The protein belongs to the QueA family. In terms of assembly, monomer.

It is found in the cytoplasm. The enzyme catalyses 7-aminomethyl-7-carbaguanosine(34) in tRNA + S-adenosyl-L-methionine = epoxyqueuosine(34) in tRNA + adenine + L-methionine + 2 H(+). It functions in the pathway tRNA modification; tRNA-queuosine biosynthesis. Functionally, transfers and isomerizes the ribose moiety from AdoMet to the 7-aminomethyl group of 7-deazaguanine (preQ1-tRNA) to give epoxyqueuosine (oQ-tRNA). This chain is S-adenosylmethionine:tRNA ribosyltransferase-isomerase, found in Tolumonas auensis (strain DSM 9187 / NBRC 110442 / TA 4).